Here is a 953-residue protein sequence, read N- to C-terminus: Communesin biosynthesis cluster-specific transcription factor cnsN (953 aa).

A disordered region spans residues 371 to 418 (ELESTSPRTSHSSLSQDDTASLHSRSSLSSSPGRFPPSQKLVATSDSP). Over residues 374–408 (STSPRTSHSSLSQDDTASLHSRSSLSSSPGRFPPS) the composition is skewed to low complexity.

It is found in the nucleus. Functionally, transcriptional regulator; part of the gene cluster that mediates the biosynthesis of communesins, a prominent class of indole alkaloids with great potential as pharmaceuticals. This chain is Communesin biosynthesis cluster-specific transcription factor cnsN, found in Penicillium expansum (Blue mold rot fungus).